The following is a 273-amino-acid chain: 3-methyl-2-oxobutanoate hydroxymethyltransferase (273 aa).

Residues D53 and D92 each contribute to the Mg(2+) site. Residues 53–54 (DS), D92, and K122 each bind 3-methyl-2-oxobutanoate. Position 124 (E124) interacts with Mg(2+). E191 functions as the Proton acceptor in the catalytic mechanism.

The protein belongs to the PanB family. Homodecamer; pentamer of dimers. Requires Mg(2+) as cofactor.

It localises to the cytoplasm. The catalysed reaction is 3-methyl-2-oxobutanoate + (6R)-5,10-methylene-5,6,7,8-tetrahydrofolate + H2O = 2-dehydropantoate + (6S)-5,6,7,8-tetrahydrofolate. It participates in cofactor biosynthesis; (R)-pantothenate biosynthesis; (R)-pantoate from 3-methyl-2-oxobutanoate: step 1/2. In terms of biological role, catalyzes the reversible reaction in which hydroxymethyl group from 5,10-methylenetetrahydrofolate is transferred onto alpha-ketoisovalerate to form ketopantoate. The chain is 3-methyl-2-oxobutanoate hydroxymethyltransferase from Parabacteroides distasonis (strain ATCC 8503 / DSM 20701 / CIP 104284 / JCM 5825 / NCTC 11152).